We begin with the raw amino-acid sequence, 194 residues long: 7-methyl-GTP pyrophosphatase (194 aa).

Asp69 serves as the catalytic Proton acceptor.

This sequence belongs to the Maf family. YceF subfamily. It depends on a divalent metal cation as a cofactor.

The protein localises to the cytoplasm. It catalyses the reaction N(7)-methyl-GTP + H2O = N(7)-methyl-GMP + diphosphate + H(+). Nucleoside triphosphate pyrophosphatase that hydrolyzes 7-methyl-GTP (m(7)GTP). May have a dual role in cell division arrest and in preventing the incorporation of modified nucleotides into cellular nucleic acids. The polypeptide is 7-methyl-GTP pyrophosphatase (Sodalis glossinidius (strain morsitans)).